Reading from the N-terminus, the 241-residue chain is Endonuclease NucS (241 aa).

Belongs to the NucS endonuclease family.

The protein resides in the cytoplasm. In terms of biological role, cleaves both 3' and 5' ssDNA extremities of branched DNA structures. The chain is Endonuclease NucS from Corynebacterium jeikeium (strain K411).